The following is a 1108-amino-acid chain: Activity-dependent neuroprotector homeobox protein (1108 aa).

The interval 1–685 (MFQLPVNNLG…ASTITLHLVH (685 aa)) is binds to beta-catenin/CTNNB1. Residues lysine 39 and lysine 72 each participate in a glycyl lysine isopeptide (Lys-Gly) (interchain with G-Cter in SUMO2) cross-link. The C2H2-type 1; degenerate zinc-finger motif lies at 74–97 (FCCSACPFSSKFFSAYKSHFRNVH). Serine 98 is modified (phosphoserine). The C2H2-type 2; degenerate zinc-finger motif lies at 107–129 (LNCPYCTFNADKKTLETHIKIFH). Residues 133–154 (SSAPSSSLSTFKDKNKNDGLKP) form a disordered region. Residues 143 to 154 (FKDKNKNDGLKP) are compositionally biased toward basic and acidic residues. Glycyl lysine isopeptide (Lys-Gly) (interchain with G-Cter in SUMO2) cross-links involve residues lysine 144 and lysine 155. Residues 165 to 188 (YYCKKCTYRDPLYEIVRKHIYREH) form a C2H2-type 3; degenerate zinc finger. Glycyl lysine isopeptide (Lys-Gly) (interchain with G-Cter in SUMO2) cross-links involve residues lysine 203, lysine 231, lysine 266, lysine 274, lysine 278, lysine 279, lysine 311, and lysine 335. The C2H2-type 4; degenerate zinc-finger motif lies at 221 to 244 (IHCKRCLFMPKSYEALVQHVIEDH). Position 348 is an asymmetric dimethylarginine (arginine 348). The interval 354 to 361 (NAPVSIPQ) is neuroprotective peptide; contributes to CTNNB1-binding, but less effective than whole N-terminal region. A disordered region spans residues 360–438 (PQQSQSVKQL…PAATGPPPSN (79 aa)). Residues lysine 367 and lysine 407 each participate in a glycyl lysine isopeptide (Lys-Gly) (interchain with G-Cter in SUMO2) cross-link. The span at 393 to 422 (SLQTANTSLPPGQVKSPSVSQSQASRVLGQ) shows a compositional bias: polar residues. A phosphoserine mark is found at serine 408 and serine 412. Residue lysine 426 forms a Glycyl lysine isopeptide (Lys-Gly) (interchain with G-Cter in SUMO2) linkage. A compositionally biased stretch (pro residues) spans 426 to 437 (KPPPAATGPPPS). The C2H2-type 5; atypical zinc-finger motif lies at 446–468 (KICTICNELFPENVYSVHFEKEH). C2H2-type zinc fingers lie at residues 488–509 (SKCL…MLIH) and 511–534 (LSCP…RMVH). Glycyl lysine isopeptide (Lys-Gly) (interchain with G-Cter in SUMO2) cross-links involve residues lysine 599 and lysine 605. Serine 607 is modified (phosphoserine). Residues lysine 615, lysine 620, lysine 631, and lysine 657 each participate in a glycyl lysine isopeptide (Lys-Gly) (interchain with G-Cter in SUMO2) cross-link. The C2H2-type 8; atypical zinc finger occupies 621–646 (TLCPLCFSILKGPISDALAHHLRERH). The C2H2-type 9; atypical zinc-finger motif lies at 661-685 (YKCIHCLGVYTSNMTASTITLHLVH). The segment at 690 to 711 (GKTQNGQDKTNAPSRLNQSPGL) is disordered. Polar residues predominate over residues 691–709 (KTQNGQDKTNAPSRLNQSP). A Glycyl lysine isopeptide (Lys-Gly) (interchain with G-Cter in SUMO2) cross-link involves residue lysine 698. Position 708 is a phosphoserine (serine 708). Residues lysine 715, lysine 727, and lysine 730 each participate in a glycyl lysine isopeptide (Lys-Gly) (interchain with G-Cter in SUMO2) cross-link. Serine 737 carries the phosphoserine modification. A Glycyl lysine isopeptide (Lys-Gly) (interchain with G-Cter in SUMO2) cross-link involves residue lysine 744. The homeobox DNA-binding region spans 753-813 (LDPKGHEDDS…SNKRKKCVRD (61 aa)). Serine 804 is modified (phosphoserine). Glycyl lysine isopeptide (Lys-Gly) (interchain with G-Cter in SUMO2) cross-links involve residues lysine 806, lysine 828, and lysine 834. The span at 851 to 880 (KDSRVNASKTVDKKHNLGKEDDSFSDSFEH) shows a compositional bias: basic and acidic residues. The disordered stretch occupies residues 851 to 1037 (KDSRVNASKT…DTEQLKWKNS (187 aa)). Phosphoserine is present on residues serine 875, serine 877, serine 885, serine 888, and serine 904. Residues lysine 913, lysine 928, and lysine 941 each participate in a glycyl lysine isopeptide (Lys-Gly) (interchain with G-Cter in SUMO2) cross-link. The span at 928-938 (KEEEEEEEEED) shows a compositional bias: acidic residues. Residues 939–959 (GSKYETIHLTEEPAKLMHDAS) are compositionally biased toward basic and acidic residues. Serine 959 and serine 961 each carry phosphoserine. Positions 977 to 988 (PSESGPGSQQIS) are enriched in polar residues. Lysine 1022 participates in a covalent cross-link: Glycyl lysine isopeptide (Lys-Gly) (interchain with G-Cter in SUMO2). N6-acetyllysine; alternate is present on residues lysine 1041 and lysine 1048. Residues lysine 1041 and lysine 1048 each participate in a glycyl lysine isopeptide (Lys-Gly) (interchain with G-Cter in SUMO2); alternate cross-link. The disordered stretch occupies residues 1050 to 1108 (QSQWENASENAERLPNPQIEWQNSTIDSEDGEQFDSMTDGVADPMHGSLTGVKLSSQQA). The residue at position 1077 (serine 1077) is a Phosphoserine.

Interacts (via N-terminal region) with beta-catenin/CTNNB1 (via the central armadillo domains); interaction is direct and stabilizes CTNNB1 by modulating its phosphorylation by glycogen synthase kinase-3 beta GSK3B. As to expression, expressed in the brain, with a higher expression in cerebellum and hippocampus. Weakly expressed in lung, kidney and intestine, and expressed at intermediate level in testis.

The protein localises to the nucleus. It is found in the chromosome. Its function is as follows. May be involved in transcriptional regulation. May mediate some of the neuroprotective peptide VIP-associated effects involving normal growth and cancer proliferation. Positively modulates WNT-beta-catenin/CTNN1B signaling, acting by regulating phosphorylation of, and thereby stabilizing, CTNNB1. May be required for neural induction and neuronal differentiation. May be involved in erythroid differentiation. The protein is Activity-dependent neuroprotector homeobox protein (Adnp) of Mus musculus (Mouse).